We begin with the raw amino-acid sequence, 267 residues long: N-formylglutamate deformylase (267 aa).

This sequence belongs to the N-formylglutamate deformylase family. In terms of assembly, monomer.

It catalyses the reaction N-formyl-L-glutamate + H2O = formate + L-glutamate. Its pathway is amino-acid degradation; L-histidine degradation into L-glutamate; L-glutamate from N-formimidoyl-L-glutamate (deiminase route): step 2/2. Stimulated by Co(2+). Fe(2+) is also a good activator, particularly at lower concentrations, but it inhibits slightly the activity when used at concentrations over 0.1 mM. Other divalent metals tested (Cd(2+), Ca(2+), Mn(2+), Zn(2+), Ni(2+) and Mg(2+)) are not effective activators. Catalyzes the hydrolysis of N-formyl-L-glutamate to formate and L-glutamate. The chain is N-formylglutamate deformylase from Pseudomonas putida (Arthrobacter siderocapsulatus).